Consider the following 338-residue polypeptide: Cap-specific mRNA (nucleoside-2'-O-)-methyltransferase (338 aa).

An mRNA-binding site is contributed by Tyr22. Residues Gln39, Tyr66, Gly68, Gly72, Asp95, Arg97, Val116, and Asp138 each contribute to the S-adenosyl-L-methionine site. Positions 169–249 (PAASSLKWRC…NKIIRNRIII (81 aa)) are binding to NPH-I. The interval 169-333 (PAASSLKWRC…NTKKSVRGNK (165 aa)) is binding to Rap94. Lys175 (for methyltransferase activity) is an active-site residue. MRNA is bound by residues 177-180 (RCPF), Asp182, 205-207 (SAE), and Glu233. Residues 305–338 (HHEPTQRKVPSKNTMLKSRNTKKSVRGNKQGRRT) form a disordered region. Basic residues predominate over residues 323-338 (RNTKKSVRGNKQGRRT).

This sequence belongs to the class I-like SAM-binding methyltransferase superfamily. Poxvirus/kinetoplastid 2'-O-MTase family. As to quaternary structure, interacts with poly(A) polymerase catalytic subunit OPG063. Interacts with OPG109 and OPG123; these interactions might help linking transcription to capping and polyadenylation.

Its subcellular location is the virion. It catalyses the reaction a 5'-end (N(7)-methyl 5'-triphosphoguanosine)-ribonucleoside in mRNA + S-adenosyl-L-methionine = a 5'-end (N(7)-methyl 5'-triphosphoguanosine)-(2'-O-methyl-ribonucleoside) in mRNA + S-adenosyl-L-homocysteine + H(+). Displays methyltransferase, positive regulation of the poly(A) polymerase and transcription elongation activities. Involved in the modification of both mRNA ends and in intermediate and late gene positive transcription elongation. At the mRNAs 5' end, methylates the ribose 2' OH group of the first transcribed nucleotide, thereby producing a 2'-O-methylpurine cap. At the 3' end, functions as a processivity factor which stimulates the activity of the viral poly(A) polymerase OPG063 that creates mRNA's poly(A) tail. In the presence of OPG102, OPG063 does not dissociate from the RNA allowing tail elongation to around 250 adenylates. The chain is Cap-specific mRNA (nucleoside-2'-O-)-methyltransferase (OPG102) from Oryctolagus cuniculus (Rabbit).